Reading from the N-terminus, the 156-residue chain is Small ribosomal subunit protein uS7 (156 aa).

The protein belongs to the universal ribosomal protein uS7 family. Part of the 30S ribosomal subunit. Contacts proteins S9 and S11.

Its function is as follows. One of the primary rRNA binding proteins, it binds directly to 16S rRNA where it nucleates assembly of the head domain of the 30S subunit. Is located at the subunit interface close to the decoding center, probably blocks exit of the E-site tRNA. The protein is Small ribosomal subunit protein uS7 of Tolumonas auensis (strain DSM 9187 / NBRC 110442 / TA 4).